Reading from the N-terminus, the 242-residue chain is MLLIPAIDLKGGNCVRLRQGRMEDDTVFSDDPVATAQRWVEAGAKRLHIVDLDGAVQGEPVNAHAIAAICAGFPDLEIQVGGGIRSEEQIETYIQAGVRYVIIGTQAVKAPGFVADATVSFPGHIMVGIDARDGKVATEGWSKLSRHDPIDLAQRFAADGIEAIIYTDISRDGMLSGPNISATVALAQAVPVPVIASGGIANLEQVLALKAHESDGITGAITGRAIYEGTLDFSQARAQAEA.

Residue D8 is the Proton acceptor of the active site. The Proton donor role is filled by D130.

The protein belongs to the HisA/HisF family.

It is found in the cytoplasm. It carries out the reaction 1-(5-phospho-beta-D-ribosyl)-5-[(5-phospho-beta-D-ribosylamino)methylideneamino]imidazole-4-carboxamide = 5-[(5-phospho-1-deoxy-D-ribulos-1-ylimino)methylamino]-1-(5-phospho-beta-D-ribosyl)imidazole-4-carboxamide. Its pathway is amino-acid biosynthesis; L-histidine biosynthesis; L-histidine from 5-phospho-alpha-D-ribose 1-diphosphate: step 4/9. In Acidithiobacillus ferrooxidans (strain ATCC 53993 / BNL-5-31) (Leptospirillum ferrooxidans (ATCC 53993)), this protein is 1-(5-phosphoribosyl)-5-[(5-phosphoribosylamino)methylideneamino] imidazole-4-carboxamide isomerase.